A 498-amino-acid polypeptide reads, in one-letter code: Glycerol kinase (498 aa).

Position 12 (Thr-12) interacts with ADP. 3 residues coordinate ATP: Thr-12, Thr-13, and Ser-14. Sn-glycerol 3-phosphate is bound at residue Thr-12. Residue Arg-16 participates in ADP binding. Sn-glycerol 3-phosphate is bound by residues Arg-82, Glu-83, Tyr-135, and Asp-245. Positions 82, 83, 135, 245, and 246 each coordinate glycerol. Thr-267 and Gly-310 together coordinate ADP. ATP is bound by residues Thr-267, Gly-310, Gln-314, and Gly-411. Positions 411 and 415 each coordinate ADP.

The protein belongs to the FGGY kinase family. Homotetramer and homodimer (in equilibrium).

It catalyses the reaction glycerol + ATP = sn-glycerol 3-phosphate + ADP + H(+). It participates in polyol metabolism; glycerol degradation via glycerol kinase pathway; sn-glycerol 3-phosphate from glycerol: step 1/1. Its activity is regulated as follows. Activated by phosphorylation and inhibited by fructose 1,6-bisphosphate (FBP). In terms of biological role, key enzyme in the regulation of glycerol uptake and metabolism. Catalyzes the phosphorylation of glycerol to yield sn-glycerol 3-phosphate. This chain is Glycerol kinase, found in Clostridium botulinum (strain Alaska E43 / Type E3).